Consider the following 895-residue polypeptide: Plasma membrane ATPase 1 (895 aa).

Residues 1-53 (MSATEPTNEKVDKIVSDDEDEDIDQLVADLQSNPGAGDEEEEEENDSSFKAVP) form a disordered region. At 1–92 (MSATEPTNEK…AEEQENLVLK (92 aa)) the chain is on the cytoplasmic side. Residues 7 to 16 (TNEKVDKIVS) are compositionally biased toward basic and acidic residues. Positions 37-46 (GDEEEEEEND) are enriched in acidic residues. The chain crosses the membrane as a helical span at residues 93–113 (FVMFFVGPIQFVMEAAAVLAA). Over 114–117 (GLED) the chain is Extracellular. Residues 118–137 (WVDFGVICALLLLNAFVGFI) form a helical membrane-spanning segment. Topologically, residues 138–268 (QEYQAGSIVD…GTGHFTEVLN (131 aa)) are cytoplasmic. Residues 269–290 (GIGTTLLVFVIVTLLVVWVACF) traverse the membrane as a helical segment. Residues 291–301 (YRTVRIVPILR) lie on the Extracellular side of the membrane. The helical transmembrane segment at 302 to 324 (YTLAITIIGVPVGLPAVVTTTMA) threads the bilayer. Over 325 to 696 (VGAAYLAKKQ…IAILNRSLDI (372 aa)) the chain is Cytoplasmic. The 4-aspartylphosphate intermediate role is filled by Asp355. 2 residues coordinate Mg(2+): Asp611 and Asp615. The helical transmembrane segment at 697–715 (NLIVFIAIFADVATLAIAY) threads the bilayer. Topologically, residues 716 to 731 (DNAPYDPKPVKWNLPR) are extracellular. A helical transmembrane segment spans residues 732–751 (LWGMSIVLGIILAIGTWITL). At 752-801 (TTMLLPKGGIIQNFGGLDGILFLQISLTENWLIFVTRAQGPFWSSIPSWQ) the chain is on the cytoplasmic side. A helical membrane pass occupies residues 802–822 (LSGAVLIVDIIATCFTLFGWW). Over 823–834 (SQNWTDIVTVVR) the chain is Extracellular. A helical transmembrane segment spans residues 835-851 (TWIWSFGVFCVMGGAYY). At 852–895 (LMSTSEAFDNFCNGRKPQQHTDKRSLEDFLVSMQRVSTQHEKST) the chain is on the cytoplasmic side.

The protein belongs to the cation transport ATPase (P-type) (TC 3.A.3) family. Type IIIA subfamily.

Its subcellular location is the cell membrane. It catalyses the reaction ATP + H2O + H(+)(in) = ADP + phosphate + 2 H(+)(out). Its function is as follows. The plasma membrane ATPase of plants and fungi is a hydrogen ion pump. The proton gradient it generates drives the active transport of nutrients by H(+)-symport. The resulting external acidification and/or internal alkinization may mediate growth responses. The chain is Plasma membrane ATPase 1 (PMA1) from Candida albicans (Yeast).